A 479-amino-acid polypeptide reads, in one-letter code: Altronate oxidoreductase (479 aa).

18-29 serves as a coordination point for NAD(+); that stretch reads IIQFGEGNFLRA.

It belongs to the mannitol dehydrogenase family. UxaB subfamily.

The enzyme catalyses D-altronate + NAD(+) = keto-D-tagaturonate + NADH + H(+). It functions in the pathway carbohydrate metabolism; pentose and glucuronate interconversion. The polypeptide is Altronate oxidoreductase (Phocaeicola vulgatus (strain ATCC 8482 / DSM 1447 / JCM 5826 / CCUG 4940 / NBRC 14291 / NCTC 11154) (Bacteroides vulgatus)).